The sequence spans 143 residues: Protein Wnt-1 (143 aa).

S1 carries the O-palmitoleoyl serine; by PORCN lipid modification. Residues 38 to 81 (EGVRGNSNRGDRGDRRDRGDRSDNGGTEANFQPYNSNHKPPGPR) are disordered. Over residues 46–60 (RGDRGDRRDRGDRSD) the composition is skewed to basic and acidic residues. Polar residues predominate over residues 64–75 (TEANFQPYNSNH). A disulfide bridge links C109 with C124. N-linked (GlcNAc...) asparagine glycosylation is found at N110 and N111.

Belongs to the Wnt family. Palmitoleoylation is required for efficient binding to frizzled receptors. Palmitoleoylation is necessary for proper trafficking to cell surface. Depalmitoleoylated by NOTUM, leading to inhibit Wnt signaling pathway.

It is found in the secreted. The protein localises to the extracellular space. It localises to the extracellular matrix. In terms of biological role, ligand for members of the frizzled family of seven transmembrane receptors. Probable developmental protein. This Evasterias troschelii (Mottled sea star) protein is Protein Wnt-1 (WNT-1).